The chain runs to 895 residues: Stonin-2 (895 aa).

Disordered stretches follow at residues 10 to 101 (THQS…AISN), 144 to 204 (ASES…METI), and 236 to 279 (NEVG…PKST). Basic and acidic residues predominate over residues 64–73 (SHSEQDDSSE). 2 stretches are compositionally biased toward polar residues: residues 145–169 (SESS…TDLQ) and 179–193 (GRAS…SSSL). Phosphoserine is present on residues serine 278, serine 284, and serine 299. 2 disordered regions span residues 291–326 (ISSL…SPIN) and 386–424 (QIDD…PRDG). 2 short sequence motifs (NPF) span residues 310-312 (NPF) and 326-328 (NPF). Residues 311–323 (PFLNESLQDIQPS) are compositionally biased toward polar residues. The 134-residue stretch at 424-557 (GWPMMLRIPE…DLPVQSMDLS (134 aa)) folds into the SHD domain. An MHD domain is found at 565–872 (EEEITVDIRD…AHYSYKVEIE (308 aa)). Serine 759 carries the phosphoserine modification.

It belongs to the Stoned B family. As to quaternary structure, interacts with the second C2 domain of synaptotagmins SYT1 and SYT2. Interacts with EPS15, EPS15R and ITSN1. Interacts indirectly with the AP-2 adapter complex. Interacts with TOR1A and COPS4; the interaction controls STON2 protein stability. In terms of processing, phosphorylated in vitro by PKD. Neddylated and ubiquitinated; leading to its degradation and inhibited by TOR1A and COPS4.

The protein localises to the synapse. It localises to the synaptosome. Its subcellular location is the cytoplasm. The protein resides in the membrane. Functionally, adapter protein involved in endocytic machinery. Involved in the synaptic vesicle recycling. May facilitate clathrin-coated vesicle uncoating. The sequence is that of Stonin-2 (Ston2) from Rattus norvegicus (Rat).